Consider the following 84-residue polypeptide: U21-theraphotoxin-Cg1b (84 aa).

Residues 1–21 form the signal peptide; it reads MKVSVLITLAVLGVMFLLTSA. Residues 22–47 constitute a propeptide that is removed on maturation; that stretch reads EERGSDQMDSPAWLKSMERIFQSEER. 3 disulfides stabilise this stretch: Cys49–Cys63, Cys56–Cys68, and Cys62–Cys76. Position 82 is a phenylalanine amide (Phe82).

The protein belongs to the neurotoxin 10 (Hwtx-1) family. 05 (F4a) subfamily. Expressed by the venom gland.

The protein localises to the secreted. Probable ion channel inhibitor. This is U21-theraphotoxin-Cg1b from Chilobrachys guangxiensis (Chinese earth tiger tarantula).